The sequence spans 503 residues: ATP synthase subunit alpha (503 aa).

169–176 (GDRKTGKT) serves as a coordination point for ATP.

This sequence belongs to the ATPase alpha/beta chains family. F-type ATPases have 2 components, CF(1) - the catalytic core - and CF(0) - the membrane proton channel. CF(1) has five subunits: alpha(3), beta(3), gamma(1), delta(1), epsilon(1). CF(0) has three main subunits: a(1), b(2) and c(9-12). The alpha and beta chains form an alternating ring which encloses part of the gamma chain. CF(1) is attached to CF(0) by a central stalk formed by the gamma and epsilon chains, while a peripheral stalk is formed by the delta and b chains.

Its subcellular location is the cell membrane. It carries out the reaction ATP + H2O + 4 H(+)(in) = ADP + phosphate + 5 H(+)(out). Its function is as follows. Produces ATP from ADP in the presence of a proton gradient across the membrane. The alpha chain is a regulatory subunit. This chain is ATP synthase subunit alpha, found in Lactobacillus johnsonii (strain CNCM I-12250 / La1 / NCC 533).